The primary structure comprises 503 residues: UDP-N-acetylmuramate--L-alanine ligase (503 aa).

ATP is bound at residue Gly120–Ser126.

This sequence belongs to the MurCDEF family.

Its subcellular location is the cytoplasm. The catalysed reaction is UDP-N-acetyl-alpha-D-muramate + L-alanine + ATP = UDP-N-acetyl-alpha-D-muramoyl-L-alanine + ADP + phosphate + H(+). It functions in the pathway cell wall biogenesis; peptidoglycan biosynthesis. Its function is as follows. Cell wall formation. This Rhodococcus opacus (strain B4) protein is UDP-N-acetylmuramate--L-alanine ligase.